The primary structure comprises 373 residues: 3-dehydroquinate synthase (373 aa).

NAD(+)-binding positions include 67 to 72 (EGEETK), 101 to 105 (GVILD), 125 to 126 (TT), Lys138, and Lys147. 3 residues coordinate Zn(2+): Glu180, His240, and His256.

This sequence belongs to the sugar phosphate cyclases superfamily. Dehydroquinate synthase family. NAD(+) is required as a cofactor. It depends on Co(2+) as a cofactor. The cofactor is Zn(2+).

It is found in the cytoplasm. The catalysed reaction is 7-phospho-2-dehydro-3-deoxy-D-arabino-heptonate = 3-dehydroquinate + phosphate. It functions in the pathway metabolic intermediate biosynthesis; chorismate biosynthesis; chorismate from D-erythrose 4-phosphate and phosphoenolpyruvate: step 2/7. Catalyzes the conversion of 3-deoxy-D-arabino-heptulosonate 7-phosphate (DAHP) to dehydroquinate (DHQ). This Chlamydia trachomatis serovar L2 (strain ATCC VR-902B / DSM 19102 / 434/Bu) protein is 3-dehydroquinate synthase.